A 752-amino-acid chain; its full sequence is Photosystem I P700 chlorophyll a apoprotein A1 (752 aa).

The next 8 helical transmembrane spans lie at 73 to 96 (IFAAHFGHLAVVTIWLSGMIFHGA), 159 to 182 (LYCTAIGGLVLAGLFLFAGWFHYH), 198 to 222 (LNHHLQVLLGCGSLGWAGHLIHVSA), 294 to 312 (IAHHHLAIAVVFIIAGHQY), 349 to 372 (WHAQLATNLAFLGSLTIIIAHHMY), 388 to 414 (LCIFTHHIWIGGFLIVGGAAHAAIFMV), 436 to 458 (AIISHLNWVCIFLGFHSFGLYIH), and 533 to 551 (FLIHHIHAFTIHVTVLILL). C575 and C584 together coordinate [4Fe-4S] cluster. A run of 2 helical transmembrane segments spans residues 591–612 (HVFLGLFWMYNSLSIVIFHFSW) and 666–688 (LSAYGLMFLGAHFVWAFSLMFLF). H677 provides a ligand contact to chlorophyll a'. Residues M685 and Y693 each coordinate chlorophyll a. Residue W694 participates in phylloquinone binding. A helical transmembrane segment spans residues 726–746 (AVGVAHYLLGGIATTWAFFHA).

Belongs to the PsaA/PsaB family. The PsaA/B heterodimer binds the P700 chlorophyll special pair and subsequent electron acceptors. PSI consists of a core antenna complex that captures photons, and an electron transfer chain that converts photonic excitation into a charge separation. The cyanobacterial PSI reaction center is composed of one copy each of PsaA,B,C,D,E,F,I,J,K,L,M and X, and forms trimeric complexes. The cofactor is PSI electron transfer chain: 5 chlorophyll a, 1 chlorophyll a', 2 phylloquinones and 3 4Fe-4S clusters. PSI core antenna: 90 chlorophyll a, 22 carotenoids, 3 phospholipids and 1 galactolipid. P700 is a chlorophyll a/chlorophyll a' dimer, A0 is one or more chlorophyll a, A1 is one or both phylloquinones and FX is a shared 4Fe-4S iron-sulfur center..

Its subcellular location is the cellular thylakoid membrane. It carries out the reaction reduced [plastocyanin] + hnu + oxidized [2Fe-2S]-[ferredoxin] = oxidized [plastocyanin] + reduced [2Fe-2S]-[ferredoxin]. Its function is as follows. PsaA and PsaB bind P700, the primary electron donor of photosystem I (PSI), as well as the electron acceptors A0, A1 and FX. PSI is a plastocyanin/cytochrome c6-ferredoxin oxidoreductase, converting photonic excitation into a charge separation, which transfers an electron from the donor P700 chlorophyll pair to the spectroscopically characterized acceptors A0, A1, FX, FA and FB in turn. Oxidized P700 is reduced on the lumenal side of the thylakoid membrane by plastocyanin or cytochrome c6. This Nostoc sp. (strain PCC 7120 / SAG 25.82 / UTEX 2576) protein is Photosystem I P700 chlorophyll a apoprotein A1.